The primary structure comprises 4022 residues: Intermembrane lipid transfer protein VPS13B (4022 aa).

The region spanning 2 to 102 (LESYVTPILM…KDGIQDDHES (101 aa)) is the Chorein N-terminal domain. The disordered stretch occupies residues 100–134 (HESCGSNSTNRSTAESTKSSIKPRRMQQAAPTDPD). Over residues 103 to 119 (CGSNSTNRSTAESTKSS) the composition is skewed to polar residues. S414, S999, S1002, and S1033 each carry phosphoserine. The segment at 1247-1314 (NLSPTSPETM…SVTLEQTTSN (68 aa)) is disordered. Polar residues-rich tracts occupy residues 1264–1292 (PVRS…TEGD) and 1302–1314 (FSDS…TTSN). At S1815 the chain carries Phosphoserine. The span at 1860-1872 (KSQEQKNNEKTDK) shows a compositional bias: basic and acidic residues. A disordered region spans residues 1860–1880 (KSQEQKNNEKTDKSSLNLPEV). An SHR-BD domain is found at 2631-2716 (HFVICNDTQE…RTASLIIKVQ (86 aa)). Residues 3908–4022 (AFPVTEIDCA…KNKALRKGFP (115 aa)) form a localizes the protein to the Golgi apparatus region.

Belongs to the VPS13 family. In terms of assembly, interacts with STX6. Interacts with STX12. Interacts with RAB6A isoform 1 (GTP-bound) and isoform 2 (GTP-bound). Interacts with RAB6B (GTP-bound). In terms of tissue distribution, widely expressed. There is apparent differential expression of different transcripts. In fetal brain, lung, liver, and kidney, two transcripts of 2 and 5 kb are identified. These transcripts are also seen in all adult tissues analyzed. A larger transcript (12-14 kb) is expressed in prostate, testis, ovary, and colon in the adult. Expression is very low in adult brain tissue. Expressed in peripheral blood lymphocytes. Isoform 1 and isoform 2 are expressed in brain and retina. Isoform 2 is expressed ubiquitously.

Its subcellular location is the recycling endosome membrane. The protein localises to the cytoplasmic vesicle. It localises to the secretory vesicle. The protein resides in the acrosome membrane. It is found in the golgi apparatus. Its subcellular location is the cis-Golgi network membrane. The protein localises to the endoplasmic reticulum-Golgi intermediate compartment membrane. It localises to the trans-Golgi network membrane. The protein resides in the early endosome membrane. It is found in the lysosome membrane. Functionally, mediates the transfer of lipids between membranes at organelle contact sites. Binds phosphatidylinositol 3-phosphate. Functions as a tethering factor in the slow endocytic recycling pathway, to assist traffic between early and recycling endosomes. Involved in the transport of proacrosomal vesicles to the nuclear dense lamina (NDL) during spermatid development. Plays a role in the assembly of the Golgi apparatus, possibly by mediating trafficking to the Golgi membrane. Plays a role in the development of the nervous system, and may be required for neuron projection development. May also play a role during adipose tissue development. Required for maintenance of the ocular lens. This Homo sapiens (Human) protein is Intermembrane lipid transfer protein VPS13B (VPS13B).